A 403-amino-acid polypeptide reads, in one-letter code: Putative transport protein TP_0553 (403 aa).

Transmembrane regions (helical) follow at residues 10 to 30, 31 to 51, 92 to 112, 202 to 222, 243 to 263, 271 to 291, 293 to 313, and 350 to 370; these read ISLF…FVPY, LTVL…YRAL, AAVF…FIAI, LYFF…ALPL, KGLF…YGIF, LAML…CVWL, VGIS…LFVA, and TFGF…FTVI.

It belongs to the autoinducer-2 exporter (AI-2E) (TC 2.A.86) family.

The protein localises to the cell membrane. The chain is Putative transport protein TP_0553 from Treponema pallidum (strain Nichols).